A 397-amino-acid chain; its full sequence is S-layer protein B (397 aa).

The N-terminal stretch at 1 to 24 is a signal peptide; the sequence is MVVKKTFVLSTLILISVVALVSTA. Residues 259-314 adopt a coiled-coil conformation; it reads INALNNEVSTLRSEISSLNSTIASLNKSLANANTQISNLQSEITTLNSEIGKLNST. The chain crosses the membrane as a helical span at residues 373 to 393; that stretch reads GGIIAGIIGLIVAIVAIVLVM.

The protein belongs to the Sulfolobales SlaB family. In terms of assembly, the mushroom-shaped unit cells of the Sulfolobales' S-layers may consist of three SlaB subunits and six SlaA subunits.

The protein localises to the secreted. It localises to the cell wall. The protein resides in the S-layer. It is found in the cell membrane. S-layer small protein. May anchor the complex to the cell membrane. The polypeptide is S-layer protein B (Saccharolobus solfataricus (strain ATCC 35092 / DSM 1617 / JCM 11322 / P2) (Sulfolobus solfataricus)).